An 846-amino-acid chain; its full sequence is Inactive cap-specific mRNA (nucleoside-2'-O-)-methyltransferase 1B (846 aa).

The segment at Asp30–Lys50 is disordered. One can recognise a G-patch domain in the interval Gln44–Trp90. The RrmJ-type SAM-dependent 2'-O-MTase domain maps to Phe184–Arg413.

The chain is Inactive cap-specific mRNA (nucleoside-2'-O-)-methyltransferase 1B from Caenorhabditis briggsae.